Reading from the N-terminus, the 285-residue chain is Type II secretion system protein C (285 aa).

Residues Met1–Arg27 are Cytoplasmic-facing. Residues Phe28–Phe48 traverse the membrane as a helical segment. The Periplasmic portion of the chain corresponds to Leu49–His285.

Belongs to the GSP C family.

The protein localises to the cell inner membrane. Its function is as follows. Involved in a type II secretion system (T2SS, formerly general secretion pathway, GSP) for the export of proteins. Required for the translocation of the multiple pectic enzymes. The sequence is that of Type II secretion system protein C (outC) from Pectobacterium carotovorum subsp. carotovorum (Erwinia carotovora subsp. carotovora).